A 281-amino-acid chain; its full sequence is 2,3,4,5-tetrahydropyridine-2,6-dicarboxylate N-succinyltransferase (281 aa).

The substrate site is built by R108 and D145.

Belongs to the transferase hexapeptide repeat family. Homotrimer.

The protein localises to the cytoplasm. The catalysed reaction is (S)-2,3,4,5-tetrahydrodipicolinate + succinyl-CoA + H2O = (S)-2-succinylamino-6-oxoheptanedioate + CoA. The protein operates within amino-acid biosynthesis; L-lysine biosynthesis via DAP pathway; LL-2,6-diaminopimelate from (S)-tetrahydrodipicolinate (succinylase route): step 1/3. The protein is 2,3,4,5-tetrahydropyridine-2,6-dicarboxylate N-succinyltransferase of Bradyrhizobium diazoefficiens (strain JCM 10833 / BCRC 13528 / IAM 13628 / NBRC 14792 / USDA 110).